We begin with the raw amino-acid sequence, 268 residues long: Tryptophan synthase alpha chain (268 aa).

Residues Glu-49 and Asp-60 each act as proton acceptor in the active site.

It belongs to the TrpA family. Tetramer of two alpha and two beta chains.

The enzyme catalyses (1S,2R)-1-C-(indol-3-yl)glycerol 3-phosphate + L-serine = D-glyceraldehyde 3-phosphate + L-tryptophan + H2O. It functions in the pathway amino-acid biosynthesis; L-tryptophan biosynthesis; L-tryptophan from chorismate: step 5/5. In terms of biological role, the alpha subunit is responsible for the aldol cleavage of indoleglycerol phosphate to indole and glyceraldehyde 3-phosphate. The sequence is that of Tryptophan synthase alpha chain from Vibrio vulnificus (strain CMCP6).